The following is a 326-amino-acid chain: Olfactory receptor 11H1 (326 aa).

Residues 1–44 (MCPLTLQVTGLMNVSEPNSSFAFVNEFILQGFSCEWTIQIFLFS) are Extracellular-facing. N-linked (GlcNAc...) asparagine glycans are attached at residues asparagine 13 and asparagine 18. The chain crosses the membrane as a helical span at residues 45 to 65 (LFTTTYALTITGNGAIAFVLW). At 66-72 (CDRRLHT) the chain is on the cytoplasmic side. A helical transmembrane segment spans residues 73-93 (PMYMFLGNFSFLEIWYVSSTV). The Extracellular portion of the chain corresponds to 94–112 (PKMLVNFLSEKKNISFAGC). N-linked (GlcNAc...) asparagine glycosylation is present at asparagine 106. Cysteines 112 and 194 form a disulfide. The chain crosses the membrane as a helical span at residues 113 to 133 (FLQFYFFFSLGTSECLLLTVM). The Cytoplasmic portion of the chain corresponds to 134–158 (AFDQYLAICRPLLYPNIMTGHLYAK). The helical transmembrane segment at 159–179 (LVILCWVCGFLWFLIPIVLIS) threads the bilayer. Residues 180 to 216 (QMPFCGPNIIDHVVCDPGPRFALDCVSAPRIQLFCYT) lie on the Extracellular side of the membrane. The helical transmembrane segment at 217–237 (LSSLVIFGNFLFIIGSYTLVL) threads the bilayer. Residues 238–259 (KAMLGMPSSTGRHKAFSTCGSH) lie on the Cytoplasmic side of the membrane. A helical membrane pass occupies residues 260-280 (LAVVSLCYSSLMVMYVSPGLG). The Extracellular segment spans residues 281–287 (HSTGMQK). A helical transmembrane segment spans residues 288–308 (IETLFYAMVTPLFNPLIYSLQ). Topologically, residues 309–326 (NKEIKAALRKVLGSSNII) are cytoplasmic.

The protein belongs to the G-protein coupled receptor 1 family.

The protein resides in the cell membrane. In terms of biological role, odorant receptor. This Homo sapiens (Human) protein is Olfactory receptor 11H1 (OR11H1).